Reading from the N-terminus, the 204-residue chain is Holliday junction branch migration complex subunit RuvA (204 aa).

Positions 1–64 (MIAQLKGSLA…EDAFLLYGFH (64 aa)) are domain I. The tract at residues 65-143 (SESQRKVFNL…ALPMAAPTTA (79 aa)) is domain II. Residues 144 to 154 (IGAATMAANPA) form a flexible linker region. A domain III region spans residues 154–204 (AGLREEVASALLNLGYKPPQVDAALAKLFSAGEITDISVALKGALKLLAPA).

Belongs to the RuvA family. As to quaternary structure, homotetramer. Forms an RuvA(8)-RuvB(12)-Holliday junction (HJ) complex. HJ DNA is sandwiched between 2 RuvA tetramers; dsDNA enters through RuvA and exits via RuvB. An RuvB hexamer assembles on each DNA strand where it exits the tetramer. Each RuvB hexamer is contacted by two RuvA subunits (via domain III) on 2 adjacent RuvB subunits; this complex drives branch migration. In the full resolvosome a probable DNA-RuvA(4)-RuvB(12)-RuvC(2) complex forms which resolves the HJ.

The protein resides in the cytoplasm. Its function is as follows. The RuvA-RuvB-RuvC complex processes Holliday junction (HJ) DNA during genetic recombination and DNA repair, while the RuvA-RuvB complex plays an important role in the rescue of blocked DNA replication forks via replication fork reversal (RFR). RuvA specifically binds to HJ cruciform DNA, conferring on it an open structure. The RuvB hexamer acts as an ATP-dependent pump, pulling dsDNA into and through the RuvAB complex. HJ branch migration allows RuvC to scan DNA until it finds its consensus sequence, where it cleaves and resolves the cruciform DNA. The sequence is that of Holliday junction branch migration complex subunit RuvA from Magnetococcus marinus (strain ATCC BAA-1437 / JCM 17883 / MC-1).